The chain runs to 431 residues: tRNA(Ile)-lysidine synthase (431 aa).

19 to 24 serves as a coordination point for ATP; the sequence is STGIDS.

It belongs to the tRNA(Ile)-lysidine synthase family.

Its subcellular location is the cytoplasm. It carries out the reaction cytidine(34) in tRNA(Ile2) + L-lysine + ATP = lysidine(34) in tRNA(Ile2) + AMP + diphosphate + H(+). Functionally, ligates lysine onto the cytidine present at position 34 of the AUA codon-specific tRNA(Ile) that contains the anticodon CAU, in an ATP-dependent manner. Cytidine is converted to lysidine, thus changing the amino acid specificity of the tRNA from methionine to isoleucine. This Staphylococcus aureus (strain Mu50 / ATCC 700699) protein is tRNA(Ile)-lysidine synthase.